Consider the following 77-residue polypeptide: UPF0154 protein LCK_00994 (77 aa).

A helical membrane pass occupies residues 5–25 (FGILIFVLGLVIGLVIGFFVA). The tract at residues 50-77 (SMGQKPSQKKLNQMMAQMKQQSEQSQKK) is disordered.

It belongs to the UPF0154 family.

The protein resides in the cell membrane. The polypeptide is UPF0154 protein LCK_00994 (Leuconostoc citreum (strain KM20)).